The following is a 193-amino-acid chain: Potassium-transporting ATPase KdpC subunit (193 aa).

Residues 14–34 (ITFTFLVLCGLVYPLIVTGIA) traverse the membrane as a helical segment.

The protein belongs to the KdpC family. The system is composed of three essential subunits: KdpA, KdpB and KdpC.

It localises to the cell membrane. In terms of biological role, part of the high-affinity ATP-driven potassium transport (or Kdp) system, which catalyzes the hydrolysis of ATP coupled with the electrogenic transport of potassium into the cytoplasm. This subunit acts as a catalytic chaperone that increases the ATP-binding affinity of the ATP-hydrolyzing subunit KdpB by the formation of a transient KdpB/KdpC/ATP ternary complex. The chain is Potassium-transporting ATPase KdpC subunit from Bacillus thuringiensis subsp. konkukian (strain 97-27).